Here is a 469-residue protein sequence, read N- to C-terminus: Spermatogenesis-associated protein 21 (469 aa).

Disordered regions lie at residues 1–76 and 99–157; these read MDNR…AGTQ and HRRA…MGAP. The span at 49–61 shows a compositional bias: basic and acidic residues; that stretch reads EVRDIGERREPDR. Low complexity predominate over residues 62 to 73; that stretch reads AQQQPQKPAVAA. A compositionally biased stretch (polar residues) spans 105 to 132; it reads ARSQTAQKSPRTLTPVPTSAPSLPQTPA. The span at 146-157 shows a compositional bias: pro residues; that stretch reads APGPEPAPMGAP. The stretch at 198–225 forms a coiled coil; the sequence is EPEEQSLQKLYQNREKSEEQLTLKQEEA. One can recognise an EF-hand domain in the interval 255–290; sequence VTLAQVEDALMSADVNGDGRVDFKDFLAVMTDTRRF. Residues D268, N270, D272, R274, and D279 each coordinate Ca(2+). Positions 424 to 469 are disordered; that stretch reads YALDQCTPPGLDPDIRSPFFQSGSQGNREHNSDSRKWLSSVPARTH. A compositionally biased stretch (basic and acidic residues) spans 450 to 459; that stretch reads NREHNSDSRK.

Functionally, involved in the differentiation of haploid spermatids. In Homo sapiens (Human), this protein is Spermatogenesis-associated protein 21 (SPATA21).